A 97-amino-acid polypeptide reads, in one-letter code: Small ribosomal subunit protein bS20 (97 aa).

It belongs to the bacterial ribosomal protein bS20 family.

Binds directly to 16S ribosomal RNA. This chain is Small ribosomal subunit protein bS20, found in Prochlorococcus marinus (strain MIT 9515).